We begin with the raw amino-acid sequence, 335 residues long: Glyceraldehyde-3-phosphate dehydrogenase (335 aa).

Residues 12–13, Asp-34, Arg-78, and Ser-120 contribute to the NAD(+) site; that span reads RI. D-glyceraldehyde 3-phosphate is bound by residues 151–153 and Thr-182; that span reads SCT. Catalysis depends on Cys-152, which acts as the Nucleophile. Asn-183 contacts NAD(+). D-glyceraldehyde 3-phosphate-binding positions include Arg-197, 210 to 211, and Arg-233; that span reads TG. Asn-315 serves as a coordination point for NAD(+).

This sequence belongs to the glyceraldehyde-3-phosphate dehydrogenase family. In terms of assembly, homotetramer.

Its subcellular location is the cytoplasm. It catalyses the reaction D-glyceraldehyde 3-phosphate + phosphate + NAD(+) = (2R)-3-phospho-glyceroyl phosphate + NADH + H(+). It functions in the pathway carbohydrate degradation; glycolysis; pyruvate from D-glyceraldehyde 3-phosphate: step 1/5. Its function is as follows. Catalyzes the oxidative phosphorylation of glyceraldehyde 3-phosphate (G3P) to 1,3-bisphosphoglycerate (BPG) using the cofactor NAD. The first reaction step involves the formation of a hemiacetal intermediate between G3P and a cysteine residue, and this hemiacetal intermediate is then oxidized to a thioester, with concomitant reduction of NAD to NADH. The reduced NADH is then exchanged with the second NAD, and the thioester is attacked by a nucleophilic inorganic phosphate to produce BPG. The protein is Glyceraldehyde-3-phosphate dehydrogenase (gap) of Priestia megaterium (strain DSM 319 / IMG 1521) (Bacillus megaterium).